An 890-amino-acid chain; its full sequence is MSMEESIIRIPPYHYIHVLDQNSNVSRVEVGPKTYIRQDNERILFAPVRMLTVPPRHYCMVANPVARDAQGTVLFDVTGQVRLRHADLEIRLAQDPFPLFPGEVLEKDITPLQVVLPNTALHLKALLDFEDKNGQKVVAGDEWLFEGPGTYIPQKEVEVIEIIQATVIKQNQALRLRARKECLDRDGKERVTGEEWLVRSVGAYLPAVFEEVLDVVDAVILTEKTALHLRARQNFRDVRGVTRRTGEEWLVTVQDTEAHVPDVYEEVMGVVSVTTLGPHNYCVILDPVGPDGKNQLGQKLVFKGEQSFFLQPGEKLERGIQNVYVLSEQQGLLLRALQPLEEGEGKEKVSHQAGDHWLIRGPLEYVPPAKVEVVEERQAIPLDENEGIYVQDVKTGRVRAVIGSTYMLTQDEVLWEKELPPGVEELLNKGQDPLADRGEKETSKTPKLSTPRNKTRVVSYRVPHNAAVQVYDYREKKARVVFGPELVLLGPEEQFTVLSLSAGRPKRPHARRTLCLLLGPDFFTDVITIETADHARLQLQLAYNWHFELSDRKDPQETAKLFSVPDFVGDACKAIASRVRGAVASVTFDDFHKNSARIIRTAVFGFETQETKGPDTMALPQPRDRAVFPQNGLVVSSVDVQSVEPVDQRTRDALQRSVQLAIEIATNSQEAAAKHEAQRLEQEARGRLERQKILDQSEAEKARRELLELEALSTAVESTGTAKAEAESRAEAARIEGEGAVLQAKLKAEALAIETEAELERVKKVRELELLYARAQLELEVSKAQQLAEVEVKKFKQMTEALGPSTIRDMAVAGPEMQVKLLQSLGLKSTLITDGSTPINLFNTALGLLGLGAEAQPPAKKPTGGPSVQEGLLPISTAAPLTLGNNQVVP.

MVP repeat units follow at residues 2 to 56 (SMEE…VPPR), 57 to 111 (HYCM…DITP), 112 to 164 (LQVV…EIIQ), 165 to 217 (ATVI…DVVD), 218 to 272 (AVIL…GVVS), 273 to 323 (VTTL…IQNV), 324 to 379 (YVLS…ERQA), 380 to 457 (IPLD…KTRV), and 458 to 520 (VSYR…LLGP). Residues 425–455 (ELLNKGQDPLADRGEKETSKTPKLSTPRNKT) are disordered. Residues 434–444 (LADRGEKETSK) are compositionally biased toward basic and acidic residues. Lys444 participates in a covalent cross-link: Glycyl lysine isopeptide (Lys-Gly) (interchain with G-Cter in SUMO2).

As to quaternary structure, the vault ribonucleoprotein particle is a huge (400 A x 670 A) cage structure of 12.9 MDa. It consists of a dimer of half-vaults, with each half-vault comprising 39 identical major vault protein (MVP) chains, PARP4 and one or more vault RNAs (vRNAs). Interacts with TEP1. Interacts with PTEN and activated MAPK1. The phosphorylated protein interacts with the SH2 domains of PTPN11 and SRC. Interacts with APEX1. May interact with ZNF540. In terms of processing, phosphorylated on Tyr residues after EGF stimulation. Dephosphorylated by PTPN11.

Its subcellular location is the cytoplasm. The protein resides in the nucleus. In terms of biological role, required for normal vault structure. Vaults are multi-subunit structures that may act as scaffolds for proteins involved in signal transduction. Vaults may also play a role in nucleo-cytoplasmic transport. Down-regulates IFNG-mediated STAT1 signaling and subsequent activation of JAK. Down-regulates SRC activity and signaling through MAP kinases. The sequence is that of Major vault protein (MVP) from Bos taurus (Bovine).